Reading from the N-terminus, the 204-residue chain is Dual specificity protein phosphatase 18 (204 aa).

The Tyrosine-protein phosphatase domain maps to 19-160 (GLSQITKSLF…LIHYEFQLFG (142 aa)). A sufficient for mitochondrial localization region spans residues 95–141 (MKQGRTLLHCAAGVSRSAALCLAYLMKYHVMSLLDAHAWTKSRRPII). Catalysis depends on cysteine 104, which acts as the Phosphocysteine intermediate.

It belongs to the protein-tyrosine phosphatase family. Non-receptor class dual specificity subfamily.

The protein resides in the cytoplasm. It localises to the nucleus. It is found in the mitochondrion inner membrane. It carries out the reaction O-phospho-L-tyrosyl-[protein] + H2O = L-tyrosyl-[protein] + phosphate. The catalysed reaction is O-phospho-L-seryl-[protein] + H2O = L-seryl-[protein] + phosphate. It catalyses the reaction O-phospho-L-threonyl-[protein] + H2O = L-threonyl-[protein] + phosphate. Its function is as follows. Can dephosphorylate single and diphosphorylated synthetic MAPK peptides, with preference for the phosphotyrosine and diphosphorylated forms over phosphothreonine. In vitro, dephosphorylates p-nitrophenyl phosphate (pNPP). The chain is Dual specificity protein phosphatase 18 (Dusp18) from Rattus norvegicus (Rat).